The chain runs to 200 residues: Putative NAD(P)H nitroreductase Spy0809 (200 aa).

FMN serves as cofactor.

This Streptococcus pyogenes serotype M6 (strain ATCC BAA-946 / MGAS10394) protein is Putative NAD(P)H nitroreductase Spy0809.